A 473-amino-acid polypeptide reads, in one-letter code: Phosphoglucosamine mutase (473 aa).

The active-site Phosphoserine intermediate is the S102. Residues S102, D248, D250, and D252 each contribute to the Mg(2+) site. Position 102 is a phosphoserine (S102).

The protein belongs to the phosphohexose mutase family. The cofactor is Mg(2+). Activated by phosphorylation.

The catalysed reaction is alpha-D-glucosamine 1-phosphate = D-glucosamine 6-phosphate. Catalyzes the conversion of glucosamine-6-phosphate to glucosamine-1-phosphate. This Rhodospirillum centenum (strain ATCC 51521 / SW) protein is Phosphoglucosamine mutase.